The primary structure comprises 315 residues: Homoserine O-succinyltransferase (315 aa).

C142 functions as the Acyl-thioester intermediate in the catalytic mechanism. Substrate-binding residues include K163 and S192. The Proton acceptor role is filled by H235. Residue E237 is part of the active site. Residue R249 coordinates substrate.

The protein belongs to the MetA family.

The protein localises to the cytoplasm. It carries out the reaction L-homoserine + succinyl-CoA = O-succinyl-L-homoserine + CoA. It participates in amino-acid biosynthesis; L-methionine biosynthesis via de novo pathway; O-succinyl-L-homoserine from L-homoserine: step 1/1. Functionally, transfers a succinyl group from succinyl-CoA to L-homoserine, forming succinyl-L-homoserine. The chain is Homoserine O-succinyltransferase from Tolumonas auensis (strain DSM 9187 / NBRC 110442 / TA 4).